We begin with the raw amino-acid sequence, 954 residues long: Glycine dehydrogenase (decarboxylating) (954 aa).

Position 704 is an N6-(pyridoxal phosphate)lysine (Lys704).

This sequence belongs to the GcvP family. In terms of assembly, the glycine cleavage system is composed of four proteins: P, T, L and H. Requires pyridoxal 5'-phosphate as cofactor.

The enzyme catalyses N(6)-[(R)-lipoyl]-L-lysyl-[glycine-cleavage complex H protein] + glycine + H(+) = N(6)-[(R)-S(8)-aminomethyldihydrolipoyl]-L-lysyl-[glycine-cleavage complex H protein] + CO2. In terms of biological role, the glycine cleavage system catalyzes the degradation of glycine. The P protein binds the alpha-amino group of glycine through its pyridoxal phosphate cofactor; CO(2) is released and the remaining methylamine moiety is then transferred to the lipoamide cofactor of the H protein. This chain is Glycine dehydrogenase (decarboxylating), found in Sinorhizobium medicae (strain WSM419) (Ensifer medicae).